Here is a 424-residue protein sequence, read N- to C-terminus: Enolase (424 aa).

Position 162 (glutamine 162) interacts with (2R)-2-phosphoglycerate. The active-site Proton donor is the glutamate 204. Residues aspartate 241, glutamate 284, and aspartate 311 each contribute to the Mg(2+) site. (2R)-2-phosphoglycerate is bound by residues lysine 336, arginine 365, serine 366, and lysine 387. The active-site Proton acceptor is lysine 336.

The protein belongs to the enolase family. Mg(2+) is required as a cofactor.

The protein localises to the cytoplasm. Its subcellular location is the secreted. The protein resides in the cell surface. The catalysed reaction is (2R)-2-phosphoglycerate = phosphoenolpyruvate + H2O. It functions in the pathway carbohydrate degradation; glycolysis; pyruvate from D-glyceraldehyde 3-phosphate: step 4/5. Functionally, catalyzes the reversible conversion of 2-phosphoglycerate (2-PG) into phosphoenolpyruvate (PEP). It is essential for the degradation of carbohydrates via glycolysis. This chain is Enolase, found in Rhizobium etli (strain ATCC 51251 / DSM 11541 / JCM 21823 / NBRC 15573 / CFN 42).